The chain runs to 284 residues: 2-dehydro-3-deoxyphosphooctonate aldolase (284 aa).

It belongs to the KdsA family.

The protein localises to the cytoplasm. It carries out the reaction D-arabinose 5-phosphate + phosphoenolpyruvate + H2O = 3-deoxy-alpha-D-manno-2-octulosonate-8-phosphate + phosphate. Its pathway is carbohydrate biosynthesis; 3-deoxy-D-manno-octulosonate biosynthesis; 3-deoxy-D-manno-octulosonate from D-ribulose 5-phosphate: step 2/3. The protein operates within bacterial outer membrane biogenesis; lipopolysaccharide biosynthesis. The chain is 2-dehydro-3-deoxyphosphooctonate aldolase from Glaesserella parasuis serovar 5 (strain SH0165) (Haemophilus parasuis).